We begin with the raw amino-acid sequence, 133 residues long: DNA-directed RNA polymerase subunit omega (133 aa).

The protein belongs to the RNA polymerase subunit omega family. In terms of assembly, the RNAP catalytic core consists of 2 alpha, 1 beta, 1 beta' and 1 omega subunit. When a sigma factor is associated with the core the holoenzyme is formed, which can initiate transcription.

The enzyme catalyses RNA(n) + a ribonucleoside 5'-triphosphate = RNA(n+1) + diphosphate. Functionally, promotes RNA polymerase assembly. Latches the N- and C-terminal regions of the beta' subunit thereby facilitating its interaction with the beta and alpha subunits. This Brucella abortus (strain S19) protein is DNA-directed RNA polymerase subunit omega.